Here is a 71-residue protein sequence, read N- to C-terminus: Protein translocase subunit SecE (71 aa).

The chain crosses the membrane as a helical span at residues 43–63; sequence VAGVGILAVGAIGFIIYVLLT.

The protein belongs to the SecE/SEC61-gamma family. In terms of assembly, component of the Sec protein translocase complex. Heterotrimer consisting of SecY (alpha), SecG (beta) and SecE (gamma) subunits. The heterotrimers can form oligomers, although 1 heterotrimer is thought to be able to translocate proteins. Interacts with the ribosome. May interact with SecDF, and other proteins may be involved.

Its subcellular location is the cell membrane. Essential subunit of the Sec protein translocation channel SecYEG. Clamps together the 2 halves of SecY. May contact the channel plug during translocation. This Methanosarcina barkeri (strain Fusaro / DSM 804) protein is Protein translocase subunit SecE.